The chain runs to 116 residues: T cell receptor alpha variable 19 (116 aa).

The first 21 residues, 1-21 (MLTASLLRAVIASICVVSSMA), serve as a signal peptide directing secretion. The region spanning 22–116 (QKVTQAQTEI…SAVYFCALSE (95 aa)) is the Ig-like domain. The cysteines at positions 43 and 112 are disulfide-linked. An N-linked (GlcNAc...) asparagine glycan is attached at Asn-96.

Alpha-beta TR is a heterodimer composed of an alpha and beta chain; disulfide-linked. The alpha-beta TR is associated with the transmembrane signaling CD3 coreceptor proteins to form the TR-CD3 (TcR or TCR). The assembly of alpha-beta TR heterodimers with CD3 occurs in the endoplasmic reticulum where a single alpha-beta TR heterodimer associates with one CD3D-CD3E heterodimer, one CD3G-CD3E heterodimer and one CD247 homodimer forming a stable octameric structure. CD3D-CD3E and CD3G-CD3E heterodimers preferentially associate with TR alpha and TR beta chains, respectively. The association of the CD247 homodimer is the last step of TcR assembly in the endoplasmic reticulum and is required for transport to the cell surface.

Its subcellular location is the cell membrane. V region of the variable domain of T cell receptor (TR) alpha chain that participates in the antigen recognition. Alpha-beta T cell receptors are antigen specific receptors which are essential to the immune response and are present on the cell surface of T lymphocytes. Recognize peptide-major histocompatibility (MH) (pMH) complexes that are displayed by antigen presenting cells (APC), a prerequisite for efficient T cell adaptive immunity against pathogens. Binding of alpha-beta TR to pMH complex initiates TR-CD3 clustering on the cell surface and intracellular activation of LCK that phosphorylates the ITAM motifs of CD3G, CD3D, CD3E and CD247 enabling the recruitment of ZAP70. In turn ZAP70 phosphorylates LAT, which recruits numerous signaling molecules to form the LAT signalosome. The LAT signalosome propagates signal branching to three major signaling pathways, the calcium, the mitogen-activated protein kinase (MAPK) kinase and the nuclear factor NF-kappa-B (NF-kB) pathways, leading to the mobilization of transcription factors that are critical for gene expression and essential for T cell growth and differentiation. The T cell repertoire is generated in the thymus, by V-(D)-J rearrangement. This repertoire is then shaped by intrathymic selection events to generate a peripheral T cell pool of self-MH restricted, non-autoaggressive T cells. Post-thymic interaction of alpha-beta TR with the pMH complexes shapes TR structural and functional avidity. This Homo sapiens (Human) protein is T cell receptor alpha variable 19.